The primary structure comprises 339 residues: MMSNLPLDLVEEILSRVPATSLKRLRSTCRQWNALLKDRRFTEKHFRKAPKESLVLMLKEISVNLNVTPPSIEFKDALGLKDSHSNSEQVDIVQVLHCDGLLLCTTKDNRHVVWNPCLGETHWIQFKVDYGRVYSSFALGYIQNNESCRSYKILWRWKSNDYKSSPRQRGFEIYEFISDKWRVIDDVNHDSLVNHNYLGRCCRVSLKGNIYWLVDDVEDNSRSLLMFDFKTERFKRLCLPHFENVGHMVLSFVREEQLSVLYWSRATPKMEIWITNNIDTDATLLWRLHLDTRFNCVRIFSSLYFEEEKKVVLCCNVKLLMMIRSARTWYTLSERTMDI.

The F-box domain maps to 1 to 49 (MMSNLPLDLVEEILSRVPATSLKRLRSTCRQWNALLKDRRFTEKHFRKA).

The sequence is that of F-box protein At3g22700 from Arabidopsis thaliana (Mouse-ear cress).